The sequence spans 381 residues: Spindlin interactor and repressor of chromatin-binding protein (381 aa).

Residue K49 forms a Glycyl lysine isopeptide (Lys-Gly) (interchain with G-Cter in SUMO2) linkage. S122 and S149 each carry phosphoserine. Over residues 148-158 (PSLPSLESGQD) the composition is skewed to polar residues. Positions 148 to 170 (PSLPSLESGQDGQPDPISNPDPV) are disordered. Residues K190 and K221 each participate in a glycyl lysine isopeptide (Lys-Gly) (interchain with G-Cter in SUMO2) cross-link. 3 disordered regions span residues 203-270 (PVTP…TDGS), 285-320 (LRTT…LRGT), and 335-381 (AVSL…GSGV). Basic and acidic residues predominate over residues 219–229 (RWKESPENEPA). Residues S249 and S252 each carry the phosphoserine modification. Positions 288–299 (TDCKDSSKDSRA) are enriched in basic and acidic residues. Residues K291 and K295 each participate in a glycyl lysine isopeptide (Lys-Gly) (interchain with G-Cter in SUMO2) cross-link. Positions 304 to 315 (PQPQNPSSASPP) are enriched in low complexity. Phosphoserine is present on residues S310 and S313.

As to quaternary structure, interacts with SPIN1, SPIN2A, SPIN2B, SPIN3 and SPIN4. Interacts with TCF7L2 in a SPIN1-dependent manner. Interacts with PARP1; promoting PARP1 ADP-ribosyltransferase activity.

The protein resides in the nucleus. Its subcellular location is the chromosome. Chromatin protein that stabilizes SPIN1 and enhances its association with histone H3 trimethylated at both 'Lys-4' and 'Lys-9' (H3K4me3K9me3). Positively regulates poly-ADP-ribosylation in response to DNA damage; acts by facilitating PARP1 ADP-ribosyltransferase activity. The sequence is that of Spindlin interactor and repressor of chromatin-binding protein from Mus musculus (Mouse).